The primary structure comprises 570 residues: Protein misato homolog 1 (570 aa).

S495 is subject to Phosphoserine.

It belongs to the misato family. Present in all cell lines tested (at protein level). Widely expressed.

The protein localises to the mitochondrion outer membrane. It localises to the cytoplasm. Involved in the regulation of mitochondrial distribution and morphology. Required for mitochondrial fusion and mitochondrial network formation. This is Protein misato homolog 1 (MSTO1) from Homo sapiens (Human).